The sequence spans 505 residues: Glutamyl-tRNA(Gln) amidotransferase subunit B, mitochondrial (505 aa).

This sequence belongs to the GatB/GatE family. GatB subfamily. In terms of assembly, subunit of the heterotrimeric GatCAB amidotransferase (AdT) complex, composed of A, B and C subunits.

Its subcellular location is the mitochondrion. It carries out the reaction L-glutamyl-tRNA(Gln) + L-glutamine + ATP + H2O = L-glutaminyl-tRNA(Gln) + L-glutamate + ADP + phosphate + H(+). Allows the formation of correctly charged Gln-tRNA(Gln) through the transamidation of misacylated Glu-tRNA(Gln) in the mitochondria. The reaction takes place in the presence of glutamine and ATP through an activated gamma-phospho-Glu-tRNA(Gln). The protein is Glutamyl-tRNA(Gln) amidotransferase subunit B, mitochondrial of Schizosaccharomyces japonicus (strain yFS275 / FY16936) (Fission yeast).